A 98-amino-acid chain; its full sequence is Small ribosomal subunit protein uS19 (98 aa).

A disordered region spans residues 77–98; it reads TRTYRGHAGGKSEKGGSAPRKK.

It belongs to the universal ribosomal protein uS19 family.

Functionally, protein S19 forms a complex with S13 that binds strongly to the 16S ribosomal RNA. This chain is Small ribosomal subunit protein uS19, found in Chlorobium phaeobacteroides (strain BS1).